The primary structure comprises 233 residues: Lipoprotein-releasing system ATP-binding protein LolD (233 aa).

The region spanning 6 to 233 (LQCDNLCKRY…TAELSLMGAE (228 aa)) is the ABC transporter domain. Residue 42–49 (GSSGSGKS) coordinates ATP.

The protein belongs to the ABC transporter superfamily. Lipoprotein translocase (TC 3.A.1.125) family. The complex is composed of two ATP-binding proteins (LolD) and two transmembrane proteins (LolC and LolE).

It is found in the cell inner membrane. Part of the ABC transporter complex LolCDE involved in the translocation of mature outer membrane-directed lipoproteins, from the inner membrane to the periplasmic chaperone, LolA. Responsible for the formation of the LolA-lipoprotein complex in an ATP-dependent manner. In Salmonella paratyphi A (strain ATCC 9150 / SARB42), this protein is Lipoprotein-releasing system ATP-binding protein LolD.